The chain runs to 327 residues: Phenylalanine--tRNA ligase alpha subunit (327 aa).

Glutamate 252 is a Mg(2+) binding site.

This sequence belongs to the class-II aminoacyl-tRNA synthetase family. Phe-tRNA synthetase alpha subunit type 1 subfamily. Tetramer of two alpha and two beta subunits. Requires Mg(2+) as cofactor.

It is found in the cytoplasm. It carries out the reaction tRNA(Phe) + L-phenylalanine + ATP = L-phenylalanyl-tRNA(Phe) + AMP + diphosphate + H(+). The chain is Phenylalanine--tRNA ligase alpha subunit from Yersinia pestis bv. Antiqua (strain Antiqua).